An 81-amino-acid chain; its full sequence is Photosystem I iron-sulfur center (81 aa).

4Fe-4S ferredoxin-type domains follow at residues 2 to 31 (SHAVKIYDTCIGCTQCVRACPLDVLEMVPW) and 39 to 68 (IASSPRTEDCVGCKRCETACPTDFLSIRVY). [4Fe-4S] cluster contacts are provided by Cys-11, Cys-14, Cys-17, Cys-21, Cys-48, Cys-51, Cys-54, and Cys-58.

As to quaternary structure, the cyanobacterial PSI reaction center is composed of one copy each of PsaA,B,C,D,E,F,I,J,K,L,M and X, and forms trimeric complexes. Requires [4Fe-4S] cluster as cofactor.

It is found in the cellular thylakoid membrane. The enzyme catalyses reduced [plastocyanin] + hnu + oxidized [2Fe-2S]-[ferredoxin] = oxidized [plastocyanin] + reduced [2Fe-2S]-[ferredoxin]. In terms of biological role, apoprotein for the two 4Fe-4S centers FA and FB of photosystem I (PSI); essential for photochemical activity. FB is the terminal electron acceptor of PSI, donating electrons to ferredoxin. The C-terminus interacts with PsaA/B/D and helps assemble the protein into the PSI complex. Required for binding of PsaD and PsaE to PSI. PSI is a plastocyanin/cytochrome c6-ferredoxin oxidoreductase, converting photonic excitation into a charge separation, which transfers an electron from the donor P700 chlorophyll pair to the spectroscopically characterized acceptors A0, A1, FX, FA and FB in turn. The polypeptide is Photosystem I iron-sulfur center (Prochlorococcus marinus (strain NATL2A)).